A 314-amino-acid chain; its full sequence is MQTHDGKTAVAIIGSGNIGTDLMVKILRHGKHLRMGAFVGIDPESDGLKRAERMGVPTVSTGIEGLLSHPDFGSIGFVFDATSAGAHARHEQLLRPHGVRVIDLTPAAIGPFVVPAVNIEQHLDAPNVNMVTCGGQATIPMVAAVSRVVPVEYAEIVASISSRSAGPGTRANIDEFTETTSNAIVRVGGAQRGKAIIILNPAEPPLIMRDTVYCLVPGHADRQAIVESVERMASAVAAYVPGYRLKQTVQFDEFKGRMPQETGSAQAPRLKVSVFLEVEGAGHYLPSYAGNLDIMTSAALATAERIAARQPVAA.

An NAD(+)-binding site is contributed by 15–18; sequence SGNI. Residue Cys-133 is the Acyl-thioester intermediate of the active site. Residues 164 to 172 and Asn-291 contribute to the NAD(+) site; that span reads SAGPGTRAN.

Belongs to the acetaldehyde dehydrogenase family.

The catalysed reaction is acetaldehyde + NAD(+) + CoA = acetyl-CoA + NADH + H(+). This is Acetaldehyde dehydrogenase 2 from Pseudomonas putida (strain ATCC 700007 / DSM 6899 / JCM 31910 / BCRC 17059 / LMG 24140 / F1).